A 293-amino-acid polypeptide reads, in one-letter code: Ribosomal protein L11 methyltransferase (293 aa).

4 residues coordinate S-adenosyl-L-methionine: threonine 145, glycine 166, aspartate 188, and asparagine 230.

Belongs to the methyltransferase superfamily. PrmA family.

It is found in the cytoplasm. It carries out the reaction L-lysyl-[protein] + 3 S-adenosyl-L-methionine = N(6),N(6),N(6)-trimethyl-L-lysyl-[protein] + 3 S-adenosyl-L-homocysteine + 3 H(+). In terms of biological role, methylates ribosomal protein L11. This chain is Ribosomal protein L11 methyltransferase, found in Escherichia coli O7:K1 (strain IAI39 / ExPEC).